We begin with the raw amino-acid sequence, 651 residues long: ATP-binding cassette sub-family G member 5 (651 aa).

Residues 1–32 are disordered; that stretch reads MGDLSSLTPGGSMGLQVNRGSQSSLEGAPATA. Topologically, residues 1-383 are cytoplasmic; that stretch reads MGDLSSLTPG…RVTRNLVRNK (383 aa). The ABC transporter domain maps to 52 to 293; the sequence is RPWWDITSCR…FNDCGYPCPE (242 aa). 86–93 is an ATP binding site; the sequence is GSSGSGKT. A helical transmembrane segment spans residues 384 to 404; the sequence is LAVITRLLQNLIMGLFLLFFV. The ABC transmembrane type-2 domain occupies 388–645; that stretch reads TRLLQNLIMG…ILGIVVFKIR (258 aa). At 405–421 the chain is on the extracellular side; the sequence is LRVRSNVLKGAIQDRVG. A helical transmembrane segment spans residues 422-442; the sequence is LLYQFVGATPYTGMLNAVNLF. The Cytoplasmic segment spans residues 443-467; sequence PVLRAVSDQESQDGLYQKWQMMLAY. Residues 468-489 traverse the membrane as a helical segment; it reads ALHVLPFSVVATMIFSSVCYWT. The Extracellular segment spans residues 490-500; it reads LGLHPEVARFG. A helical membrane pass occupies residues 501–521; the sequence is YFSAALLAPHLIGEFLTLVLL. Residues 522–528 are Cytoplasmic-facing; that stretch reads GIVQNPN. A helical membrane pass occupies residues 529–549; it reads IVNSVVALLSIAGVLVGSGFL. The Extracellular portion of the chain corresponds to 550–623; that stretch reads RNIQEMPIPF…PGATSRFTMN (74 aa). Asn-584 and Asn-591 each carry an N-linked (GlcNAc...) asparagine glycan. Residues 624 to 644 traverse the membrane as a helical segment; that stretch reads FLILYSFIPALVILGIVVFKI. The Cytoplasmic segment spans residues 645-651; the sequence is RDHLISR.

The protein belongs to the ABC transporter superfamily. ABCG family. Eye pigment precursor importer (TC 3.A.1.204) subfamily. Heterodimer with ABCG8. Mg(2+) is required as a cofactor. N-glycosylated. In terms of tissue distribution, strongly expressed in the liver, lower levels in the small intestine and colon.

It is found in the cell membrane. The protein localises to the apical cell membrane. The catalysed reaction is cholesterol(in) + ATP + H2O = cholesterol(out) + ADP + phosphate + H(+). It catalyses the reaction sitosterol(in) + ATP + H2O = sitosterol(out) + ADP + phosphate + H(+). With respect to regulation, the ATPase activity of the heterodimer is stimulated by cholate. Taurocholate, glycocholate, taurochenodeoxycholate, glycochenodeoxycholate and taurodeoxycholate also stimulate ATPase activity, but to a lower degree. Glycodeoxycholate has no significant effect on ATPase activity. ATPase activity is inhibited by vanadate and by berillium fluoride. Its function is as follows. ABCG5 and ABCG8 form an obligate heterodimer that mediates Mg(2+)- and ATP-dependent sterol transport across the cell membrane. Plays an essential role in the selective transport of dietary plant sterols and cholesterol in and out of the enterocytes and in the selective sterol excretion by the liver into bile. Required for normal sterol homeostasis. The heterodimer with ABCG8 has ATPase activity. In Homo sapiens (Human), this protein is ATP-binding cassette sub-family G member 5.